A 247-amino-acid chain; its full sequence is 1-(5-phosphoribosyl)-5-[(5-phosphoribosylamino)methylideneamino] imidazole-4-carboxamide isomerase 2 (247 aa).

E8 acts as the Proton acceptor in catalysis. The active-site Proton donor is the D128.

It belongs to the HisA/HisF family.

The protein localises to the cytoplasm. It carries out the reaction 1-(5-phospho-beta-D-ribosyl)-5-[(5-phospho-beta-D-ribosylamino)methylideneamino]imidazole-4-carboxamide = 5-[(5-phospho-1-deoxy-D-ribulos-1-ylimino)methylamino]-1-(5-phospho-beta-D-ribosyl)imidazole-4-carboxamide. The protein operates within amino-acid biosynthesis; L-histidine biosynthesis; L-histidine from 5-phospho-alpha-D-ribose 1-diphosphate: step 4/9. In Ruegeria pomeroyi (strain ATCC 700808 / DSM 15171 / DSS-3) (Silicibacter pomeroyi), this protein is 1-(5-phosphoribosyl)-5-[(5-phosphoribosylamino)methylideneamino] imidazole-4-carboxamide isomerase 2.